The sequence spans 57 residues: UPF0391 membrane protein Patl_0263 (57 aa).

2 helical membrane-spanning segments follow: residues 8–28 (FFVLGVIAAVFGFGGVIGVAA) and 30–50 (IAKVIFLLCVAFVVLFSVLAF).

It belongs to the UPF0391 family.

Its subcellular location is the cell membrane. The sequence is that of UPF0391 membrane protein Patl_0263 from Pseudoalteromonas atlantica (strain T6c / ATCC BAA-1087).